A 512-amino-acid chain; its full sequence is Lysine--tRNA ligase (512 aa).

Residues E421 and E428 each coordinate Mg(2+).

The protein belongs to the class-II aminoacyl-tRNA synthetase family. In terms of assembly, homodimer. Requires Mg(2+) as cofactor.

It localises to the cytoplasm. The catalysed reaction is tRNA(Lys) + L-lysine + ATP = L-lysyl-tRNA(Lys) + AMP + diphosphate. The protein is Lysine--tRNA ligase of Aeromonas salmonicida (strain A449).